We begin with the raw amino-acid sequence, 690 residues long: Elongation factor G (690 aa).

Residues E8–V283 enclose the tr-type G domain. GTP is bound by residues A17–T24, D81–H85, and N135–D138.

Belongs to the TRAFAC class translation factor GTPase superfamily. Classic translation factor GTPase family. EF-G/EF-2 subfamily.

It localises to the cytoplasm. Functionally, catalyzes the GTP-dependent ribosomal translocation step during translation elongation. During this step, the ribosome changes from the pre-translocational (PRE) to the post-translocational (POST) state as the newly formed A-site-bound peptidyl-tRNA and P-site-bound deacylated tRNA move to the P and E sites, respectively. Catalyzes the coordinated movement of the two tRNA molecules, the mRNA and conformational changes in the ribosome. This chain is Elongation factor G, found in Rhodopseudomonas palustris (strain HaA2).